The following is a 522-amino-acid chain: Ribonuclease Y (522 aa).

Residues 3-23 (ELIMYILATAVVSIGVGIVAG) form a helical membrane-spanning segment. A KH domain is found at 212 to 272 (CVSIFNIESD…VRREVARLSL (61 aa)). The HD domain occupies 338–431 (LLQHSREVAK…VQVCDAISGA (94 aa)).

It belongs to the RNase Y family.

It localises to the cell membrane. In terms of biological role, endoribonuclease that initiates mRNA decay. The sequence is that of Ribonuclease Y from Cytophaga hutchinsonii (strain ATCC 33406 / DSM 1761 / CIP 103989 / NBRC 15051 / NCIMB 9469 / D465).